A 744-amino-acid chain; its full sequence is Polyadenylate-binding protein, cytoplasmic and nuclear (744 aa).

Positions 1–11 are enriched in polar residues; the sequence is MSEVANSTSPV. The tract at residues 1 to 42 is disordered; sequence MSEVANSTSPVQDGADANGAQINTNVPAASGDAPTPTTAAQQ. A compositionally biased stretch (low complexity) spans 33-42; that stretch reads APTPTTAAQQ. RRM domains are found at residues 48-126, 136-213, 229-306, and 332-462; these read ASLY…WSQR, GNVF…HHIP, TNIY…RAQK, and VNLY…LAQR. 4 disordered regions span residues 368-411, 527-550, 607-651, and 723-744; these read EEKK…AGDK, GRGA…NAQQ, IAGG…PGVD, and VKNK…EEKA. Residues 376-397 show a composition bias toward basic and acidic residues; it reads KEVKEEKKEDEKKEDEEAKEGS. Composition is skewed to gly residues over residues 527–545, 609–632, and 640–649; these read GRGA…GRGG, GGPG…GGRG, and PQGGRPGGPG. The PABC domain maps to 647–724; it reads GPGVDMSVLS…AMSVYDEYVK (78 aa).

This sequence belongs to the polyadenylate-binding protein type-1 family.

It is found in the cytoplasm. It localises to the nucleus. In terms of biological role, binds the poly(A) tail of mRNA. Appears to be an important mediator of the multiple roles of the poly(A) tail in mRNA biogenesis, stability and translation. In the nucleus, involved in both mRNA cleavage and polyadenylation. Is also required for efficient mRNA export to the cytoplasm. Acts in concert with a poly(A)-specific nuclease (PAN) to affect poly(A) tail shortening, which may occur concomitantly with either nucleocytoplasmic mRNA transport or translational initiation. In the cytoplasm, stimulates translation initiation and regulates mRNA decay through translation termination-coupled poly(A) shortening, probably mediated by PAN. This Phaeosphaeria nodorum (strain SN15 / ATCC MYA-4574 / FGSC 10173) (Glume blotch fungus) protein is Polyadenylate-binding protein, cytoplasmic and nuclear (PAB1).